Reading from the N-terminus, the 526-residue chain is Inosine-5'-monophosphate dehydrogenase (526 aa).

CBS domains lie at 120 to 179 (FIQD…EDPV) and 183 to 239 (MATD…PLAS). Residues 276–278 (DSS) and 326–328 (GMG) contribute to the NAD(+) site. Positions 328 and 330 each coordinate K(+). Serine 331 lines the IMP pocket. Cysteine 333 lines the K(+) pocket. Residue cysteine 333 is the Thioimidate intermediate of the active site. IMP contacts are provided by residues 366-368 (DGG) and 389-390 (GS). Residue arginine 439 is the Proton acceptor of the active site. Glutamine 451 is an IMP binding site. Serine 506 serves as a coordination point for K(+). The segment at 506–526 (SAQTEGNVHGLHTHEKKLYSS) is disordered. Residues 517-526 (HTHEKKLYSS) are compositionally biased toward basic and acidic residues.

The protein belongs to the IMPDH/GMPR family. As to quaternary structure, homotetramer. K(+) serves as cofactor.

It is found in the cytoplasm. It catalyses the reaction IMP + NAD(+) + H2O = XMP + NADH + H(+). Its pathway is secondary metabolite biosynthesis; terpenoid biosynthesis. With respect to regulation, mycophenolic acid (MPA) is a non-competitive inhibitor that prevents formation of the closed enzyme conformation by binding to the same site as the amobile flap. In contrast, mizoribine monophosphate (MZP) is a competitive inhibitor that induces the closed conformation. MPA is a potent inhibitor of mammalian IMPDHs but a poor inhibitor of the bacterial enzymes. MZP is a more potent inhibitor of bacterial IMPDH. In terms of biological role, catalyzes the conversion of inosine 5'-phosphate (IMP) to xanthosine 5'-phosphate (XMP), the first committed and rate-limiting step in the de novo synthesis of guanine nucleotides, and therefore plays an important role in the regulation of cell growth. Part of the gene cluster that mediates the biosynthesis of mycophenolic acid (MPA), the first isolated antibiotic natural product in the world. Does not play a role in the biosynthesis of MPA, but is involved in self resistance to MPA, since MPA acts as an inhibitor of IMP dehydrogenases. The chain is Inosine-5'-monophosphate dehydrogenase from Penicillium roqueforti (strain FM164).